A 282-amino-acid chain; its full sequence is MTEGDRELSALIQELWDNDTNRLRPGIDYRISLQGKAGDLAGVPDDSDGAGMPLFSFVDENIFKKETFLAFISLLDNYESDTGEPEIVTPEEEMENHRFLDSVIKTPTMKIAHKYLVEKRLSPEDTTGFKQQLYKIWFELYARKGSSKPDSSGFEHVFVGETRGGHTVIGFHNWIQLYLQEKLGHIDYKGYSVNANSPQPDENKHMLALQFSWKNGIKPKGSIFIGVSPEFEFSLYTLCFLMSPNERVKVSFNLYDVEIVCHHYNQKHIGTTYPVPVKYLNV.

The 275-residue stretch at 4 to 278 (GDRELSALIQ…IGTTYPVPVK (275 aa)) folds into the EndoU domain. Residues H156, H172, and K218 contribute to the active site.

It belongs to the ENDOU family. In terms of assembly, monomer. Requires Mn(2+) as cofactor.

It carries out the reaction ribonucleotidyl-uridine-RNA = a 5'-end dephospho-uridine-RNA + a 3'-end 2',3'-cyclophospho-ribonucleotide-RNA. Endoribonuclease that cleaves single-stranded RNAs at 5' of uridylates and releases a product with a 2',3'-cyclic phosphate at the 3'-end. The UU and GU sites are more efficiently cleaved than CU and AU sites. The protein is Uridylate-specific endoribonuclease B (endoub) of Danio rerio (Zebrafish).